A 134-amino-acid polypeptide reads, in one-letter code: Small ribosomal subunit protein uS9 (134 aa).

The segment covering 98–114 has biased composition (basic and acidic residues); it reads SKQELKSHGFLTRDPRK. Residues 98–134 are disordered; it reads SKQELKSHGFLTRDPRKKERKKYGHKKARKSFQFSKR. Over residues 115-134 the composition is skewed to basic residues; it reads KERKKYGHKKARKSFQFSKR.

It belongs to the universal ribosomal protein uS9 family.

The polypeptide is Small ribosomal subunit protein uS9 (Chlamydia caviae (strain ATCC VR-813 / DSM 19441 / 03DC25 / GPIC) (Chlamydophila caviae)).